The primary structure comprises 468 residues: MPGLPLLLLLLWGVGSHGFPAASETQEQDVEMVQKYLENYYNLKDDWRKIPKQRGNGLAVEKLKQMQEFFGLKVTGKPDAETLKMMKQPRCGVPDVAQFVLTPGNPRWEQTHLTYRIENYTPDLSRADVDNAIEKAFQLWSNVTPLTFTKVSKGQADIMISFVRGDHRDNSPFDGPEGQLAHAFQPGLGIGGDVHFDEDDRWTKDFRNYNLYRVAAHELGHSLGLSHSTDIGALMYPNYMFSGDVQLAQDDIDGIQAIYGPSQNPSQPVGPQTPKVCDSKLTFDAITTIRGEIMFFKDRFYMRANPYYSEVELNFISVFWPHLPNGLQAAYEVAHRDEILFFKGNKYWTVQGQNELPGYPKDIHSSFGFPRSVNHIDAAVSEEDTGKTYFFVANKYWRYDEYKRSMDAGYPKMIEYDFPGIGNKVDAVFKKDGFFYFFHGTRQYKFDPKTKRILTLQKANSWFNCRKN.

Residues 1–18 form the signal peptide; that stretch reads MPGLPLLLLLLWGVGSHG. The propeptide at 19–98 is activation peptide; that stretch reads FPAASETQEQ…PRCGVPDVAQ (80 aa). The short motif at 89–96 is the Cysteine switch element; sequence PRCGVPDV. Residue Cys-91 coordinates Zn(2+). N-linked (GlcNAc...) asparagine glycosylation occurs at Asn-119. The Ca(2+) site is built by Asp-123 and Asp-157. His-167 and Asp-169 together coordinate Zn(2+). The Ca(2+) site is built by Asp-174, Gly-175, Glu-177, and Gln-179. Residue His-182 participates in Zn(2+) binding. The Ca(2+) site is built by Gly-189, Gly-191, and Asp-193. A Zn(2+)-binding site is contributed by His-195. Residues Asp-197, Glu-198, and Asp-200 each coordinate Ca(2+). His-217 is a Zn(2+) binding site. Glu-218 is an active-site residue. Zn(2+)-binding residues include His-221 and His-227. A Phosphothreonine modification is found at Thr-273. Hemopexin repeat units lie at residues 274–323, 324–370, 373–421, and 422–465; these read PKVC…WPHL, PNGL…FGFP, VNHI…FPGI, and GNKV…WFNC. Cysteines 277 and 465 form a disulfide. Ca(2+)-binding residues include Asp-284 and Gln-328. Tyr-359 is subject to Phosphotyrosine; by PKDCC. Residues Asp-377 and Asp-426 each coordinate Ca(2+).

Belongs to the peptidase M10A family. It depends on Ca(2+) as a cofactor. Zn(2+) is required as a cofactor. Post-translationally, tyrosine phosphorylated in platelets by PKDCC/VLK.

It localises to the secreted. It is found in the extracellular space. The protein resides in the extracellular matrix. It catalyses the reaction Cleavage of the triple helix of collagen at about three-quarters of the length of the molecule from the N-terminus, at 775-Gly-|-Ile-776 in the alpha1(I) chain. Cleaves synthetic substrates and alpha-macroglobulins at bonds where P1' is a hydrophobic residue.. Can be activated without removal of the activation peptide. In terms of biological role, cleaves collagens of types I, II, and III at one site in the helical domain. Also cleaves collagens of types VII and X. This is Interstitial collagenase (MMP1) from Oryctolagus cuniculus (Rabbit).